The primary structure comprises 93 residues: Molybdopterin synthase sulfur carrier subunit (93 aa).

G93 is subject to 1-thioglycine; alternate. G93 bears the Glycyl adenylate; alternate mark.

This sequence belongs to the MoaD family. MOCS2A subfamily. As to quaternary structure, heterotetramer; composed of 2 small (MOCS2A) and 2 large (MOCS2B) subunits. Post-translationally, C-terminal thiocarboxylation occurs in 2 steps, it is first acyl-adenylated (-COAMP) via the hesA/moeB/thiF part of UBA4, then thiocarboxylated (-COSH) via the rhodanese domain of UBA4.

The protein localises to the cytoplasm. It participates in cofactor biosynthesis; molybdopterin biosynthesis. Acts as a sulfur carrier required for molybdopterin biosynthesis. Component of the molybdopterin synthase complex that catalyzes the conversion of precursor Z into molybdopterin by mediating the incorporation of 2 sulfur atoms into precursor Z to generate a dithiolene group. In the complex, serves as sulfur donor by being thiocarboxylated (-COSH) at its C-terminus by UBA4. After interaction with MOCS2B, the sulfur is then transferred to precursor Z to form molybdopterin. This chain is Molybdopterin synthase sulfur carrier subunit, found in Mycosarcoma maydis (Corn smut fungus).